The primary structure comprises 222 residues: Probable transaldolase (222 aa).

The Schiff-base intermediate with substrate role is filled by K91.

The protein belongs to the transaldolase family. Type 3B subfamily.

It localises to the cytoplasm. It catalyses the reaction D-sedoheptulose 7-phosphate + D-glyceraldehyde 3-phosphate = D-erythrose 4-phosphate + beta-D-fructose 6-phosphate. It participates in carbohydrate degradation; pentose phosphate pathway; D-glyceraldehyde 3-phosphate and beta-D-fructose 6-phosphate from D-ribose 5-phosphate and D-xylulose 5-phosphate (non-oxidative stage): step 2/3. In terms of biological role, transaldolase is important for the balance of metabolites in the pentose-phosphate pathway. In Chlorobaculum parvum (strain DSM 263 / NCIMB 8327) (Chlorobium vibrioforme subsp. thiosulfatophilum), this protein is Probable transaldolase.